Consider the following 570-residue polypeptide: Proline--tRNA ligase (570 aa).

Belongs to the class-II aminoacyl-tRNA synthetase family. ProS type 1 subfamily. As to quaternary structure, homodimer.

The protein resides in the cytoplasm. It carries out the reaction tRNA(Pro) + L-proline + ATP = L-prolyl-tRNA(Pro) + AMP + diphosphate. In terms of biological role, catalyzes the attachment of proline to tRNA(Pro) in a two-step reaction: proline is first activated by ATP to form Pro-AMP and then transferred to the acceptor end of tRNA(Pro). As ProRS can inadvertently accommodate and process non-cognate amino acids such as alanine and cysteine, to avoid such errors it has two additional distinct editing activities against alanine. One activity is designated as 'pretransfer' editing and involves the tRNA(Pro)-independent hydrolysis of activated Ala-AMP. The other activity is designated 'posttransfer' editing and involves deacylation of mischarged Ala-tRNA(Pro). The misacylated Cys-tRNA(Pro) is not edited by ProRS. The polypeptide is Proline--tRNA ligase (Geotalea daltonii (strain DSM 22248 / JCM 15807 / FRC-32) (Geobacter daltonii)).